The following is a 448-amino-acid chain: Probable glucuronoxylan glucuronosyltransferase IRX7 (448 aa).

The Cytoplasmic portion of the chain corresponds to 1–16 (MTTHKHRRTEKNLCFK). Residues 17–37 (QYYKWILCFILTLYFFASFFV) form a helical; Signal-anchor for type II membrane protein membrane-spanning segment. The Lumenal portion of the chain corresponds to 38-448 (DHDQDHRSST…RSVRRSNSFL (411 aa)). Asn-157, Asn-189, Asn-287, Asn-397, and Asn-438 each carry an N-linked (GlcNAc...) asparagine glycan.

The protein belongs to the glycosyltransferase 47 family. In terms of tissue distribution, expressed in developing interfascicular fibers and xylem cells in stems and developing secondary xylem in roots.

The protein resides in the golgi apparatus membrane. Its function is as follows. Involved in the synthesis of the hemicellulose glucuronoxylan, a major component of secondary cell walls. Probably involved in the synthesis of the glycosyl sequence at the glucuronoxylan reducing end. The protein is Probable glucuronoxylan glucuronosyltransferase IRX7 (IRX7) of Arabidopsis thaliana (Mouse-ear cress).